Here is a 418-residue protein sequence, read N- to C-terminus: Maltoporin (418 aa).

The N-terminal stretch at 1–26 (MLPMNRNTLGLAVTIATVFVSSTVTA) is a signal peptide.

This sequence belongs to the porin LamB (TC 1.B.3) family. In terms of assembly, homotrimer formed of three 18-stranded antiparallel beta-barrels, containing three independent channels.

The protein localises to the cell outer membrane. It carries out the reaction beta-maltose(in) = beta-maltose(out). Involved in the transport of maltose and maltodextrins. This is Maltoporin from Photobacterium profundum (strain SS9).